The chain runs to 188 residues: Proline-rich protein 3 (188 aa).

A disordered region spans residues 1–157 (MPKRKKQNHH…DPQVMEDKSD (157 aa)). Pro residues-rich tracts occupy residues 35–46 (IGPPSLLGPPPM) and 69–82 (LIPPLLSLPPPPWG). Residues 83-96 (RGPIRRGLGPRSSP) show a composition bias toward low complexity. Residues 145-157 (PKDDPQVMEDKSD) are compositionally biased toward basic and acidic residues. The segment at 155 to 183 (KSDRPVCRHFAKKGHCRYEDLCAFYHPGV) adopts a C3H1-type zinc-finger fold.

This is Proline-rich protein 3 (PRR3) from Homo sapiens (Human).